The chain runs to 256 residues: tRNA-cytidine(32) 2-sulfurtransferase (256 aa).

Positions 35 to 40 (SGGKDS) match the PP-loop motif motif. [4Fe-4S] cluster contacts are provided by Cys-110, Cys-113, and Cys-201.

This sequence belongs to the TtcA family. As to quaternary structure, homodimer. It depends on Mg(2+) as a cofactor. [4Fe-4S] cluster is required as a cofactor.

The protein resides in the cytoplasm. The catalysed reaction is cytidine(32) in tRNA + S-sulfanyl-L-cysteinyl-[cysteine desulfurase] + AH2 + ATP = 2-thiocytidine(32) in tRNA + L-cysteinyl-[cysteine desulfurase] + A + AMP + diphosphate + H(+). It functions in the pathway tRNA modification. Its function is as follows. Catalyzes the ATP-dependent 2-thiolation of cytidine in position 32 of tRNA, to form 2-thiocytidine (s(2)C32). The sulfur atoms are provided by the cysteine/cysteine desulfurase (IscS) system. The polypeptide is tRNA-cytidine(32) 2-sulfurtransferase (Coxiella burnetii (strain Dugway 5J108-111)).